The following is a 172-amino-acid chain: Large ribosomal subunit protein uL10 (172 aa).

This sequence belongs to the universal ribosomal protein uL10 family. In terms of assembly, part of the ribosomal stalk of the 50S ribosomal subunit. The N-terminus interacts with L11 and the large rRNA to form the base of the stalk. The C-terminus forms an elongated spine to which L12 dimers bind in a sequential fashion forming a multimeric L10(L12)X complex.

Functionally, forms part of the ribosomal stalk, playing a central role in the interaction of the ribosome with GTP-bound translation factors. This chain is Large ribosomal subunit protein uL10, found in Acidothermus cellulolyticus (strain ATCC 43068 / DSM 8971 / 11B).